The following is a 102-amino-acid chain: ATP-dependent Clp protease adapter protein ClpS (102 aa).

It belongs to the ClpS family. In terms of assembly, binds to the N-terminal domain of the chaperone ClpA.

Its function is as follows. Involved in the modulation of the specificity of the ClpAP-mediated ATP-dependent protein degradation. This Nitrosospira multiformis (strain ATCC 25196 / NCIMB 11849 / C 71) protein is ATP-dependent Clp protease adapter protein ClpS.